A 161-amino-acid chain; its full sequence is NAD(P)H-quinone oxidoreductase subunit I, chloroplastic (161 aa).

2 4Fe-4S ferredoxin-type domains span residues 55-84 (GRIH…VDWK) and 95-124 (LNYS…MTEE). Residues C64, C67, C70, C74, C104, C107, C110, and C114 each coordinate [4Fe-4S] cluster.

The protein belongs to the complex I 23 kDa subunit family. In terms of assembly, NDH is composed of at least 16 different subunits, 5 of which are encoded in the nucleus. It depends on [4Fe-4S] cluster as a cofactor.

It localises to the plastid. It is found in the chloroplast thylakoid membrane. The enzyme catalyses a plastoquinone + NADH + (n+1) H(+)(in) = a plastoquinol + NAD(+) + n H(+)(out). It carries out the reaction a plastoquinone + NADPH + (n+1) H(+)(in) = a plastoquinol + NADP(+) + n H(+)(out). Functionally, NDH shuttles electrons from NAD(P)H:plastoquinone, via FMN and iron-sulfur (Fe-S) centers, to quinones in the photosynthetic chain and possibly in a chloroplast respiratory chain. The immediate electron acceptor for the enzyme in this species is believed to be plastoquinone. Couples the redox reaction to proton translocation, and thus conserves the redox energy in a proton gradient. This is NAD(P)H-quinone oxidoreductase subunit I, chloroplastic from Phaseolus vulgaris (Kidney bean).